Here is a 332-residue protein sequence, read N- to C-terminus: DnAJ-like protein slr0093 (332 aa).

Positions 6–75 (FKDYYQILGV…RQKYDQFGRY (70 aa)) constitute a J domain.

In Synechocystis sp. (strain ATCC 27184 / PCC 6803 / Kazusa), this protein is DnAJ-like protein slr0093.